The sequence spans 119 residues: DNA-binding protein Maeo_0998 (119 aa).

The span at 1–11 (MDIEEIKRQKM) shows a compositional bias: basic and acidic residues. The tract at residues 1–36 (MDIEEIKRQKMMELQQQQAQGAPNPEEIQQQQEQER) is disordered. Low complexity predominate over residues 15–32 (QQQQAQGAPNPEEIQQQQ).

Belongs to the PDCD5 family.

This is DNA-binding protein Maeo_0998 from Methanococcus aeolicus (strain ATCC BAA-1280 / DSM 17508 / OCM 812 / Nankai-3).